A 107-amino-acid polypeptide reads, in one-letter code: Probable insulin-like peptide beta-type 3 (107 aa).

The first 19 residues, 1 to 19 (MKLSVVLALFIIFQLGAAS), serve as a signal peptide directing secretion. The propeptide occupies 20–55 (LMRNWMFDFEKELEHDYDDSEIGFHNIHSLMARSRR). 4 cysteine pairs are disulfide-bonded: Cys62/Cys90, Cys74/Cys103, Cys78/Cys104, and Cys89/Cys94.

The protein belongs to the insulin family.

It is found in the secreted. The chain is Probable insulin-like peptide beta-type 3 (ins-3) from Caenorhabditis elegans.